Here is an 852-residue protein sequence, read N- to C-terminus: Leucine--tRNA ligase (852 aa).

The short motif at 42 to 52 is the 'HIGH' region element; the sequence is PYPSGKLHMGH. Residues 586-606 form a disordered region; that stretch reads NKYVPADQVDPNDPKDPETGE. A 'KMSKS' region motif is present at residues 614–618; the sequence is KMSKS. Lysine 617 is an ATP binding site.

Belongs to the class-I aminoacyl-tRNA synthetase family.

It is found in the cytoplasm. It carries out the reaction tRNA(Leu) + L-leucine + ATP = L-leucyl-tRNA(Leu) + AMP + diphosphate. In Picosynechococcus sp. (strain ATCC 27264 / PCC 7002 / PR-6) (Agmenellum quadruplicatum), this protein is Leucine--tRNA ligase.